A 305-amino-acid chain; its full sequence is Orotidine 5'-phosphate decarboxylase (305 aa).

Lys108 serves as the catalytic Proton donor.

Belongs to the OMP decarboxylase family. Type 2 subfamily.

The catalysed reaction is orotidine 5'-phosphate + H(+) = UMP + CO2. Its pathway is pyrimidine metabolism; UMP biosynthesis via de novo pathway; UMP from orotate: step 2/2. The polypeptide is Orotidine 5'-phosphate decarboxylase (Caldicellulosiruptor saccharolyticus (strain ATCC 43494 / DSM 8903 / Tp8T 6331)).